The primary structure comprises 55 residues: Large ribosomal subunit protein bL33 (55 aa).

This sequence belongs to the bacterial ribosomal protein bL33 family.

The sequence is that of Large ribosomal subunit protein bL33 from Klebsiella pneumoniae (strain 342).